Reading from the N-terminus, the 118-residue chain is MATPSLRGRLARFANPGKPILKPNKPLILANRVGNRRREKGEATCITEMSMMMACWKQNEFRDEACRKEIQDFFDCSSRAQEARKMRSIQESLGQSESLSPHKMTKLLQRFPNKSHLI.

Residues 42-84 (EATCITEMSMMMACWKQNEFRDEACRKEIQDFFDCSSRAQEAR) enclose the CHCH domain. 2 consecutive short sequence motifs (cx9C motif) follow at residues 45–55 (CITEMSMMMAC) and 66–76 (CRKEIQDFFDC). Cystine bridges form between cysteine 45/cysteine 76 and cysteine 55/cysteine 66. The interval 86–105 (MRSIQESLGQSESLSPHKMT) is disordered. A compositionally biased stretch (polar residues) spans 89-99 (IQESLGQSESL).

Belongs to the mitochondrion-specific ribosomal protein mS37 family. As to quaternary structure, component of the mitochondrial ribosome small subunit (28S) which comprises a 12S rRNA and about 30 distinct proteins.

It is found in the mitochondrion. The protein resides in the nucleus. The chain is Small ribosomal subunit protein mS37 (Chchd1) from Mus musculus (Mouse).